Here is a 450-residue protein sequence, read N- to C-terminus: Sensor histidine kinase EnvZ (450 aa).

The Cytoplasmic segment spans residues methionine 1–threonine 15. A helical membrane pass occupies residues leucine 16–leucine 35. The Periplasmic segment spans residues asparagine 36–serine 158. The short motif at valine 71 to alanine 75 is the polyP-periplasmic motif element. The helical transmembrane segment at proline 159–isoleucine 179 threads the bilayer. The HAMP domain occupies arginine 180–aspartate 232. Residues arginine 180 to glycine 450 are Cytoplasmic-facing. A polyP-cytoplasmic motif motif is present at residues isoleucine 201–leucine 205. The segment at methionine 223 to arginine 289 is cytoplasmic dimerization domain (CDD), when dimerized forms osmosensitive core. Positions glycine 240–valine 440 constitute a Histidine kinase domain. Residues histidine 243, asparagine 347–tyrosine 351, aspartate 373, arginine 392–glycine 393, and threonine 402–leucine 406 each bind ATP. Histidine 243 carries the post-translational modification Phosphohistidine; by autocatalysis.

Homodimer. Interacts with MzrA. Post-translationally, autophosphorylated. Incubation of isolated EnvZ C-terminal fragment (residues 180-450) with increasing levels of NaCl or sucrose increases its autophosphorylation.

Its subcellular location is the cell inner membrane. The catalysed reaction is ATP + protein L-histidine = ADP + protein N-phospho-L-histidine.. Its activity is regulated as follows. Activity is modulated by MzrA. In the presence of 0.2 M NaCl, 2.0 mM sodium cholate (bile salts) decreases expression from the ompC promoter; how this is mediated is unknown. Autophosphorylation is inhibited by the angucycline antibiotic waldiomycin in a non-competitive manner; waldiomycin prevents dimerization of the cytoplasmic domain and autophosphorylation. Member of the two-component regulatory system EnvZ/OmpR involved in osmoregulation (particularly of genes ompF and ompC) as well as other genes. EnvZ functions as a membrane-associated protein kinase that phosphorylates OmpR in response to environmental signals; at low osmolarity OmpR activates ompF transcription, while at high osmolarity it represses ompF and activates ompC transcription. Also dephosphorylates OmpR in the presence of ATP. The cytoplasmic dimerization domain (CDD) forms an osmosensitive core; increasing osmolarity stabilizes this segment (possibly by its contraction), enhancing the autophosphorylation rate and consequently, downstream phosphotransfer to OmpR and signaling. Autophosphorylation is greater when full-length EnvZ is reconstituted in a lipid environment, lipid-mediated allostery impacts the kinase function of EnvZ. Involved in acid stress response; this requires EnvZ but not OmpR phosphorylation, and suggests that EnvZ senses cytoplasmic acidic pH. The protein is Sensor histidine kinase EnvZ (envZ) of Escherichia coli (strain K12).